A 407-amino-acid chain; its full sequence is Imidazolonepropionase (407 aa).

Residues H74 and H76 each contribute to the Fe(3+) site. H74 and H76 together coordinate Zn(2+). The 4-imidazolone-5-propanoate site is built by R83, Y146, and H179. Y146 lines the N-formimidoyl-L-glutamate pocket. H244 serves as a coordination point for Fe(3+). H244 is a binding site for Zn(2+). Position 247 (Q247) interacts with 4-imidazolone-5-propanoate. D319 lines the Fe(3+) pocket. Residue D319 coordinates Zn(2+). Residues N321 and G323 each contribute to the N-formimidoyl-L-glutamate site. Residue T324 participates in 4-imidazolone-5-propanoate binding.

Belongs to the metallo-dependent hydrolases superfamily. HutI family. Requires Zn(2+) as cofactor. The cofactor is Fe(3+).

It localises to the cytoplasm. It catalyses the reaction 4-imidazolone-5-propanoate + H2O = N-formimidoyl-L-glutamate. It functions in the pathway amino-acid degradation; L-histidine degradation into L-glutamate; N-formimidoyl-L-glutamate from L-histidine: step 3/3. Its function is as follows. Catalyzes the hydrolytic cleavage of the carbon-nitrogen bond in imidazolone-5-propanoate to yield N-formimidoyl-L-glutamate. It is the third step in the universal histidine degradation pathway. The sequence is that of Imidazolonepropionase from Salmonella agona (strain SL483).